The following is a 144-amino-acid chain: Hemoglobin embryonic subunit alpha (144 aa).

Positions 3-144 (SLSAKDKDVV…LALALAEKYR (142 aa)) constitute a Globin domain. Residue histidine 61 coordinates O2. Histidine 90 serves as a coordination point for heme b.

The protein belongs to the globin family. Heterotetramer of two alpha chains and two beta chains. As to expression, red blood cells.

Its function is as follows. Involved in oxygen transport from gills to the various peripheral tissues. This is Hemoglobin embryonic subunit alpha from Oryzias latipes (Japanese rice fish).